We begin with the raw amino-acid sequence, 550 residues long: Chaperonin GroEL 1 (550 aa).

Residues 29-32, 86-90, glycine 413, 477-479, and aspartate 493 each bind ATP; these read TIGP, DGTTT, and NAA. Residues 524–550 form a disordered region; it reads AVSDGDHGHSHGHGHSHGHSHPQGPGF. A compositionally biased stretch (basic residues) spans 533–543; that stretch reads SHGHGHSHGHS.

It belongs to the chaperonin (HSP60) family. In terms of assembly, forms a cylinder of 14 subunits composed of two heptameric rings stacked back-to-back. Interacts with the co-chaperonin GroES.

Its subcellular location is the cytoplasm. The enzyme catalyses ATP + H2O + a folded polypeptide = ADP + phosphate + an unfolded polypeptide.. In terms of biological role, together with its co-chaperonin GroES, plays an essential role in assisting protein folding. The GroEL-GroES system forms a nano-cage that allows encapsulation of the non-native substrate proteins and provides a physical environment optimized to promote and accelerate protein folding. This Frankia alni (strain DSM 45986 / CECT 9034 / ACN14a) protein is Chaperonin GroEL 1.